The chain runs to 327 residues: Phenylalanine--tRNA ligase alpha subunit (327 aa).

Glu-252 is a Mg(2+) binding site.

The protein belongs to the class-II aminoacyl-tRNA synthetase family. Phe-tRNA synthetase alpha subunit type 1 subfamily. In terms of assembly, tetramer of two alpha and two beta subunits. Requires Mg(2+) as cofactor.

It localises to the cytoplasm. It catalyses the reaction tRNA(Phe) + L-phenylalanine + ATP = L-phenylalanyl-tRNA(Phe) + AMP + diphosphate + H(+). In Yersinia pseudotuberculosis serotype O:1b (strain IP 31758), this protein is Phenylalanine--tRNA ligase alpha subunit.